Reading from the N-terminus, the 91-residue chain is PqqA binding protein (91 aa).

Belongs to the PqqD family. In terms of assembly, monomer. Interacts with PqqE.

Its pathway is cofactor biosynthesis; pyrroloquinoline quinone biosynthesis. In terms of biological role, functions as a PqqA binding protein and presents PqqA to PqqE, in the pyrroloquinoline quinone (PQQ) biosynthetic pathway. This chain is PqqA binding protein, found in Pseudomonas fluorescens (strain SBW25).